The chain runs to 379 residues: Lipoyl synthase 1, mitochondrial (379 aa).

[4Fe-4S] cluster contacts are provided by Cys-106, Cys-111, Cys-117, Cys-137, Cys-141, Cys-144, and Ser-352. The Radical SAM core domain occupies 122 to 341 (EHGTQTATIM…EERGNELGFL (220 aa)).

Belongs to the radical SAM superfamily. Lipoyl synthase family. [4Fe-4S] cluster serves as cofactor.

The protein resides in the mitochondrion. The enzyme catalyses [[Fe-S] cluster scaffold protein carrying a second [4Fe-4S](2+) cluster] + N(6)-octanoyl-L-lysyl-[protein] + 2 oxidized [2Fe-2S]-[ferredoxin] + 2 S-adenosyl-L-methionine + 4 H(+) = [[Fe-S] cluster scaffold protein] + N(6)-[(R)-dihydrolipoyl]-L-lysyl-[protein] + 4 Fe(3+) + 2 hydrogen sulfide + 2 5'-deoxyadenosine + 2 L-methionine + 2 reduced [2Fe-2S]-[ferredoxin]. It participates in protein modification; protein lipoylation via endogenous pathway; protein N(6)-(lipoyl)lysine from octanoyl-[acyl-carrier-protein]: step 2/2. Functionally, catalyzes the radical-mediated insertion of two sulfur atoms into the C-6 and C-8 positions of the octanoyl moiety bound to the lipoyl domains of lipoate-dependent enzymes, thereby converting the octanoylated domains into lipoylated derivatives. The chain is Lipoyl synthase 1, mitochondrial from Drosophila yakuba (Fruit fly).